A 369-amino-acid chain; its full sequence is Signal recognition particle receptor FtsY (369 aa).

Positions 20-42 (GEENKKEPETRQTDQLESKKEET) are enriched in basic and acidic residues. Residues 20–58 (GEENKKEPETRQTDQLESKKEETIQQQQNVQQPQAENKI) form a disordered region. A compositionally biased stretch (low complexity) spans 44–53 (QQQQNVQQPQ). GTP contacts are provided by residues 180-187 (GVNGVGKT), 262-266 (DTAGR), and 320-323 (TKVD).

This sequence belongs to the GTP-binding SRP family. FtsY subfamily. As to quaternary structure, part of the signal recognition particle protein translocation system, which is composed of SRP and FtsY.

It is found in the cell membrane. Its subcellular location is the cytoplasm. The catalysed reaction is GTP + H2O = GDP + phosphate + H(+). Its function is as follows. Involved in targeting and insertion of nascent membrane proteins into the cytoplasmic membrane. Acts as a receptor for the complex formed by the signal recognition particle (SRP) and the ribosome-nascent chain (RNC). This is Signal recognition particle receptor FtsY from Sulfolobus acidocaldarius (strain ATCC 33909 / DSM 639 / JCM 8929 / NBRC 15157 / NCIMB 11770).